A 469-amino-acid chain; its full sequence is Acetyl-CoA decarbonylase/synthase complex subunit beta 1 (469 aa).

Cys-189, Cys-192, Cys-278, and Cys-280 together coordinate [Ni-Fe-S] cluster.

It belongs to the CdhC family. In terms of assembly, monomer. The ACDS complex is made up of alpha, epsilon, beta, gamma and delta chains with a probable stoichiometry of (alpha(2)epsilon(2))(4)-beta(8)-(gamma(1)delta(1))(8) (Potential). It depends on [Ni-Fe-S] cluster as a cofactor.

The enzyme catalyses Co(I)-[corrinoid Fe-S protein] + acetyl-CoA + H(+) = methyl-Co(III)-[corrinoid Fe-S protein] + CO + CoA. It functions in the pathway one-carbon metabolism; methanogenesis from acetate. Part of a complex that catalyzes the reversible cleavage of acetyl-CoA, allowing growth on acetate as sole source of carbon and energy. The alpha-epsilon complex generates CO from CO(2), while the beta subunit (this protein) combines the CO with CoA and a methyl group to form acetyl-CoA. The methyl group, which is incorporated into acetyl-CoA, is transferred to the beta subunit by a corrinoid iron-sulfur protein (the gamma-delta complex). This Methanosarcina mazei (strain ATCC BAA-159 / DSM 3647 / Goe1 / Go1 / JCM 11833 / OCM 88) (Methanosarcina frisia) protein is Acetyl-CoA decarbonylase/synthase complex subunit beta 1 (cdhC1).